The chain runs to 362 residues: Carbamoyl phosphate synthase small chain (362 aa).

A CPSase region spans residues 1 to 172 (MKAFLVLDNG…SKYIFGTHTG (172 aa)). Residues S45, G224, and G226 each coordinate L-glutamine. The region spanning 176-362 (KLAVYDYGVK…YDLVEKTKKG (187 aa)) is the Glutamine amidotransferase type-1 domain. C252 serves as the catalytic Nucleophile. 5 residues coordinate L-glutamine: L253, Q256, N294, G296, and F297. Active-site residues include H335 and E337.

It belongs to the CarA family. Composed of two chains; the small (or glutamine) chain promotes the hydrolysis of glutamine to ammonia, which is used by the large (or ammonia) chain to synthesize carbamoyl phosphate. Tetramer of heterodimers (alpha,beta)4.

The enzyme catalyses hydrogencarbonate + L-glutamine + 2 ATP + H2O = carbamoyl phosphate + L-glutamate + 2 ADP + phosphate + 2 H(+). It catalyses the reaction L-glutamine + H2O = L-glutamate + NH4(+). The protein operates within amino-acid biosynthesis; L-arginine biosynthesis; carbamoyl phosphate from bicarbonate: step 1/1. It functions in the pathway pyrimidine metabolism; UMP biosynthesis via de novo pathway; (S)-dihydroorotate from bicarbonate: step 1/3. Its function is as follows. Small subunit of the glutamine-dependent carbamoyl phosphate synthetase (CPSase). CPSase catalyzes the formation of carbamoyl phosphate from the ammonia moiety of glutamine, carbonate, and phosphate donated by ATP, constituting the first step of 2 biosynthetic pathways, one leading to arginine and/or urea and the other to pyrimidine nucleotides. The small subunit (glutamine amidotransferase) binds and cleaves glutamine to supply the large subunit with the substrate ammonia. The protein is Carbamoyl phosphate synthase small chain of Leptospira interrogans serogroup Icterohaemorrhagiae serovar Lai (strain 56601).